We begin with the raw amino-acid sequence, 77 residues long: Conotoxin Cl6.12 (77 aa).

The first 20 residues, 1-20 (MKFYLLLTAALLLTAVIIEA), serve as a signal peptide directing secretion. The propeptide occupies 21–36 (APTDHQDEARDLMREE). 3 disulfide bridges follow: C43–C58, C51–C62, and C57–C68.

In terms of tissue distribution, expressed by the venom duct.

It is found in the secreted. The chain is Conotoxin Cl6.12 from Californiconus californicus (California cone).